The chain runs to 403 residues: 8-amino-7-oxononanoate synthase (403 aa).

Position 22 (Arg-22) interacts with substrate. Residue 109–110 participates in pyridoxal 5'-phosphate binding; the sequence is GF. His-134 lines the substrate pocket. Pyridoxal 5'-phosphate-binding residues include Ser-178, His-206, and Thr-232. The residue at position 235 (Lys-235) is an N6-(pyridoxal phosphate)lysine. Thr-348 lines the substrate pocket. Residues 383–403 are disordered; it reads SNDSGSKPSIESSFELKKEAQ. Polar residues predominate over residues 385–394; sequence DSGSKPSIES.

The protein belongs to the class-II pyridoxal-phosphate-dependent aminotransferase family. BioF subfamily. As to quaternary structure, homodimer. Pyridoxal 5'-phosphate is required as a cofactor.

It catalyses the reaction 6-carboxyhexanoyl-[ACP] + L-alanine + H(+) = (8S)-8-amino-7-oxononanoate + holo-[ACP] + CO2. The protein operates within cofactor biosynthesis; biotin biosynthesis. Its function is as follows. Catalyzes the decarboxylative condensation of pimeloyl-[acyl-carrier protein] and L-alanine to produce 8-amino-7-oxononanoate (AON), [acyl-carrier protein], and carbon dioxide. The polypeptide is 8-amino-7-oxononanoate synthase (Vibrio atlanticus (strain LGP32) (Vibrio splendidus (strain Mel32))).